The sequence spans 713 residues: Ribosomal RNA large subunit methyltransferase K/L (713 aa).

The 112-residue stretch at 43-154 (LLYRALLWSR…RDQVMLSLDL (112 aa)) folds into the THUMP domain.

The protein belongs to the methyltransferase superfamily. RlmKL family.

The protein localises to the cytoplasm. The catalysed reaction is guanosine(2445) in 23S rRNA + S-adenosyl-L-methionine = N(2)-methylguanosine(2445) in 23S rRNA + S-adenosyl-L-homocysteine + H(+). The enzyme catalyses guanosine(2069) in 23S rRNA + S-adenosyl-L-methionine = N(2)-methylguanosine(2069) in 23S rRNA + S-adenosyl-L-homocysteine + H(+). Functionally, specifically methylates the guanine in position 2445 (m2G2445) and the guanine in position 2069 (m7G2069) of 23S rRNA. The sequence is that of Ribosomal RNA large subunit methyltransferase K/L from Sodalis glossinidius (strain morsitans).